The chain runs to 314 residues: L-lactate dehydrogenase 2 (314 aa).

Residues valine 16, aspartate 37, lysine 42, tyrosine 68, and 82–83 (GV) contribute to the NAD(+) site. Substrate is bound by residues glutamine 85 and arginine 91. Residues serine 104, 121–123 (ASN), and threonine 146 each bind NAD(+). 123 to 126 (NPVD) contributes to the substrate binding site. Position 151–154 (151–154 (DTTR)) interacts with substrate. Beta-D-fructose 1,6-bisphosphate contacts are provided by arginine 156 and histidine 171. Histidine 178 acts as the Proton acceptor in catalysis. Residue tyrosine 223 is modified to Phosphotyrosine. Threonine 232 lines the substrate pocket.

It belongs to the LDH/MDH superfamily. LDH family. Homotetramer.

Its subcellular location is the cytoplasm. It catalyses the reaction (S)-lactate + NAD(+) = pyruvate + NADH + H(+). The protein operates within fermentation; pyruvate fermentation to lactate; (S)-lactate from pyruvate: step 1/1. Allosterically activated by fructose 1,6-bisphosphate (FBP). Functionally, catalyzes the conversion of lactate to pyruvate. The protein is L-lactate dehydrogenase 2 of Lactococcus lactis subsp. lactis (strain IL1403) (Streptococcus lactis).